Reading from the N-terminus, the 931-residue chain is ORF4 polyprotein (931 aa).

Post-translationally, proteolytic processing of ORF4 polyprotein yields the VP4a, VP4b and VP4c capsid proteins.

Its subcellular location is the virion. ORF4 polyprotein codes for VP4a, VP4b, and VP4c, three of the four proteins that self-assemble to form the icosahedral capsid. The capsid is made of VP3 (coded by ORF3), VP4a, VP4b and VP4c. The polypeptide is ORF4 polyprotein (Drosophila melanogaster (Fruit fly)).